A 622-amino-acid polypeptide reads, in one-letter code: MGARGNHTVDTSKQLAALRELMKKENVDVWVVPSEDQHYSEYLAHCDERRAFISGFNGSAGCAVITLDKAYLFTDGRYFLQAEKQLDSNWTLMKQGLPDVPTWQDFLHKTLDGSLKIGIDATIITEEDAAGLRKNLAPKKSELVPSKKNLVDIVWGSERPARPQNPVFHLDEKYSGQSFKEKVKKVREEIAKEKGKAFVVTMLDEVAWLFNLRGSDIDYNPVFFAYAVVTPDEVVLFINEKQLDDAARDYLGQDVKIRGYDELYDYLKELPKSLSLTGDKDGEKILVTSRTSLAITETITPPSSPESTTFHKVVRSPVGDLKAIKNAVEIEGFRQCHIRDGAALARYFAWLEEALNEGKEVSEYAGAEVLEKYRSELDLFRGLSFTTISSTGPNGAIIHYSPDPQDCAIIKKDQVYLCDSGAQFSDGTTDVTRTWHFGTPRPEEVRAFTRVLQGHIAIDTAVFPNGTTGYLIDSWARRSLWQDGLDYRHGTGHGVGHFLNVHEGPQGIGVRIAYNNTALKAGMTVSNEPGYYEDGQYGIRIENIVIVKEVKLPNNFGDKGYLGFEHVTMCPIQTKLIDASLLTEPEKKWVNDYHQEVWQKVSPLLQNDKRALEWLKRETTPI.

Mn(2+) is bound by residues Asp419, Asp430, Glu528, and Glu542.

The protein belongs to the peptidase M24B family. Mn(2+) serves as cofactor.

It catalyses the reaction Release of any N-terminal amino acid, including proline, that is linked to proline, even from a dipeptide or tripeptide.. Catalyzes the removal of a penultimate prolyl residue from the N-termini of peptides. The protein is Probable Xaa-Pro aminopeptidase P (AMPP) of Coprinopsis cinerea (strain Okayama-7 / 130 / ATCC MYA-4618 / FGSC 9003) (Inky cap fungus).